Here is a 53-residue protein sequence, read N- to C-terminus: uncharacterized protein (53 aa).

Residues 24-44 (LMTFIAVNAVLSLILIRAVIL) form a helical membrane-spanning segment.

Its subcellular location is the membrane. This is an uncharacterized protein from Methanocaldococcus jannaschii (strain ATCC 43067 / DSM 2661 / JAL-1 / JCM 10045 / NBRC 100440) (Methanococcus jannaschii).